The chain runs to 365 residues: MRKTAVVAAGGTGGHLFPAQALAEALIARGWRIVLASDERVAGLAQDFPAERRIGLSAATYRPGDPVGMMRAGFAVLRGAMHARAAFREIGPDVVVGFGGYPSAPALVAAILDRRPTVIHEQNAVMGRTNRILAPHVRTVACAFPTLKKAPPKVAGRAVVVGNPVRPPIRALADVPYVPPEPNGPVRLLVTGGSQGARLLSELVPEAVKALPEDLRRRLTVHQQTRPESMNTARRAYRDALVDAEIAPFFRDIAGRLREAHLVVGRAGAGTVCEFAIAGKPSILVPLAIALDDDQGQNARLLADAGGAEVARENQLTVDTMANALEKLLTNPARLQRMAEAARSVAIPDAAERLADVVEQTARGR.

Residues 12-14 (TGG), Asn-123, Arg-166, Ser-194, and Gln-295 contribute to the UDP-N-acetyl-alpha-D-glucosamine site.

This sequence belongs to the glycosyltransferase 28 family. MurG subfamily.

It is found in the cell inner membrane. It carries out the reaction di-trans,octa-cis-undecaprenyl diphospho-N-acetyl-alpha-D-muramoyl-L-alanyl-D-glutamyl-meso-2,6-diaminopimeloyl-D-alanyl-D-alanine + UDP-N-acetyl-alpha-D-glucosamine = di-trans,octa-cis-undecaprenyl diphospho-[N-acetyl-alpha-D-glucosaminyl-(1-&gt;4)]-N-acetyl-alpha-D-muramoyl-L-alanyl-D-glutamyl-meso-2,6-diaminopimeloyl-D-alanyl-D-alanine + UDP + H(+). It functions in the pathway cell wall biogenesis; peptidoglycan biosynthesis. Its function is as follows. Cell wall formation. Catalyzes the transfer of a GlcNAc subunit on undecaprenyl-pyrophosphoryl-MurNAc-pentapeptide (lipid intermediate I) to form undecaprenyl-pyrophosphoryl-MurNAc-(pentapeptide)GlcNAc (lipid intermediate II). This Phenylobacterium zucineum (strain HLK1) protein is UDP-N-acetylglucosamine--N-acetylmuramyl-(pentapeptide) pyrophosphoryl-undecaprenol N-acetylglucosamine transferase.